Consider the following 494-residue polypeptide: One cut domain family member 3 (494 aa).

Disordered regions lie at residues 130–162 (AAAVAGAHGGHPHAHPHPAAAPPPPPPPQRLAA), 199–239 (LSPL…GDKL), and 295–319 (AHGPHGGGGGPGGSGGGPSAGAAAE). 2 stretches are compositionally biased toward pro residues: residues 148 to 158 (AAAPPPPPPPQ) and 214 to 225 (PQPPPPPPPPPL). The span at 297-313 (GPHGGGGGPGGSGGGPS) shows a compositional bias: gly residues. Positions 312–398 (PSAGAAAEEI…QRMSALRLAA (87 aa)) form a DNA-binding region, CUT. Positions 414–473 (PKKQRLVFTDLQRRTLIAIFKENKRPSKEMQVTISQQLGLELNTVSNFFMNARRRCMNRW) form a DNA-binding region, homeobox. Residues 475–494 (EEPSTAPGGPAGATATFSKA) form a disordered region. The segment covering 476-494 (EPSTAPGGPAGATATFSKA) has biased composition (low complexity).

It belongs to the CUT homeobox family.

It localises to the nucleus. Functionally, transcriptional activator. Binds the consensus DNA sequence 5'-DHWATTGAYTWWD-3' on a variety of gene promoters such as those of HNF3B and TTR. The sequence is that of One cut domain family member 3 (ONECUT3) from Homo sapiens (Human).